Consider the following 492-residue polypeptide: Membrane-bound glycerophospholipid O-acyltransferase 1 (492 aa).

The next 6 membrane-spanning stretches (helical) occupy residues 33–53 (VNFV…RIYL), 69–89 (ILGI…LFVL), 125–145 (IYIF…MIVT), 179–199 (PSLL…AGPC), 237–257 (MGAV…FLTL), and 296–316 (YFAW…FNGM). Active-site residues include asparagine 349 and histidine 380. 3 consecutive transmembrane segments (helical) span residues 370–390 (VLTF…YFTF), 423–443 (VVTW…FVML), and 452–472 (YKSV…FLPI). Position 486 is a phosphoserine (serine 486).

Belongs to the membrane-bound acyltransferase family. In terms of tissue distribution, highly expressed in stomach, epididymis, and colon.

It localises to the endoplasmic reticulum membrane. It carries out the reaction a 1-acyl-sn-glycero-3-phosphoethanolamine + an acyl-CoA = a 1,2-diacyl-sn-glycero-3-phosphoethanolamine + CoA. The enzyme catalyses a 1-acyl-sn-glycero-3-phospho-L-serine + an acyl-CoA = a 1,2-diacyl-sn-glycero-3-phospho-L-serine + CoA. The catalysed reaction is a 1-acyl-sn-glycero-3-phosphocholine + an acyl-CoA = a 1,2-diacyl-sn-glycero-3-phosphocholine + CoA. It catalyses the reaction a 1-O-(1Z-alkenyl)-sn-glycero-3-phosphoethanolamine + (9Z)-octadecenoyl-CoA = 1-O-(1Z)-alkenyl-2-(9Z)-octadecenoyl-sn-glycero-3-phosphoethanolamine + CoA. It carries out the reaction 1-octadecanoyl-sn-glycero-3-phosphoethanolamine + (9Z)-octadecenoyl-CoA = 1-octadecanoyl-2-(9Z-octadecenoyl)-sn-glycero-3-phosphoethanolamine + CoA. The enzyme catalyses 1-(9Z-octadecenoyl)-sn-glycero-3-phospho-L-serine + (9Z)-octadecenoyl-CoA = 1,2-di-(9Z)-octadecenoyl-sn-glycero-3-phospho-L-serine + CoA. The catalysed reaction is 1-(9Z-octadecenoyl)-sn-glycero-3-phosphoethanolamine + (9Z)-octadecenoyl-CoA = 1,2-di-(9Z-octadecenoyl)-sn-glycero-3-phosphoethanolamine + CoA. It catalyses the reaction 1-hexadecanoyl-sn-glycero-3-phosphoethanolamine + (9Z)-octadecenoyl-CoA = 1-hexadecanoyl-2-(9Z-octadecenoyl)-sn-glycero-3-phosphoethanolamine + CoA. It carries out the reaction 1-(10Z-heptadecenoyl)-sn-glycero-3-phosphoethanolamine + hexadecanoyl-CoA = 1-(10Z-heptadecenoyl)-2-hexadecanoyl-sn-glycero-3-phosphoethanolamine + CoA. The enzyme catalyses 1-(9Z-octadecenoyl)-sn-glycero-3-phospho-L-serine + octadecanoyl-CoA = 1-(9Z-octadecenoyl)-2-octadecanoyl-sn-glycero-3-phospho-L-serine + CoA. The catalysed reaction is 1-(9Z-octadecenoyl)-sn-glycero-3-phospho-L-serine + (9Z)-hexadecenoyl-CoA = 1-(9Z-octadecenoyl)-2-(9Z-hexadecenoyl)-sn-glycero-3-phospho-L-serine + CoA. It catalyses the reaction 1-(9Z-octadecenoyl)-sn-glycero-3-phospho-L-serine + (9Z,12Z)-octadecadienoyl-CoA = 1-(9Z-octadecenoyl)-2-(9Z,12Z-octadienoyl)-sn-glycero-3-phospho-L-serine + CoA. It carries out the reaction 1-hexadecanoyl-sn-glycero-3-phosphocholine + (9Z)-octadecenoyl-CoA = 1-hexadecanoyl-2-(9Z-octadecenoyl)-sn-glycero-3-phosphocholine + CoA. The enzyme catalyses 1-(10Z-heptadecenoyl)-sn-glycero-3-phosphoethanolamine + (9Z)-octadecenoyl-CoA = 1-(10Z-heptadecenoyl)-2-(9Z-octadecenoyl)-sn-glycero-3-phosphoethanolamine + CoA. It functions in the pathway lipid metabolism; phospholipid metabolism. Its function is as follows. Acyltransferase which catalyzes the transfer of an acyl group from an acyl-CoA towards a lysophospholipid producing a phospholipid and participates in the reacylation step of the phospholipid remodeling pathway also known as the Lands cycle. Acts on lysophosphatidylserine (1-acyl-2-hydroxy-sn-glycero-3-phospho-L-serine or LPS) and lysophosphatidylethanolamine (1-acyl-sn-glycero-3-phosphoethanolamine or LPE), and to a lesser extend lysophosphatidylcholine. Prefers oleoyl-CoA as the acyl donor and 1-oleoyl-LPE as acceptor. May play a role in neurite outgrowth during neuronal differentiation. The protein is Membrane-bound glycerophospholipid O-acyltransferase 1 of Mus musculus (Mouse).